We begin with the raw amino-acid sequence, 159 residues long: RNA pyrophosphohydrolase (159 aa).

Positions 6 to 149 (GFRPNVGIIL…KREVYRRALK (144 aa)) constitute a Nudix hydrolase domain. Positions 38-59 (GGINPDETPEDALYRELNEEVG) match the Nudix box motif.

This sequence belongs to the Nudix hydrolase family. RppH subfamily. It depends on a divalent metal cation as a cofactor.

Its function is as follows. Accelerates the degradation of transcripts by removing pyrophosphate from the 5'-end of triphosphorylated RNA, leading to a more labile monophosphorylated state that can stimulate subsequent ribonuclease cleavage. In Pseudomonas fluorescens (strain ATCC BAA-477 / NRRL B-23932 / Pf-5), this protein is RNA pyrophosphohydrolase.